The primary structure comprises 235 residues: Orotidine 5'-phosphate decarboxylase (235 aa).

Residues D10, K32, 59 to 68 (DLKLHDIPNT), T123, R184, Q193, G213, and R214 contribute to the substrate site. K61 functions as the Proton donor in the catalytic mechanism.

It belongs to the OMP decarboxylase family. Type 1 subfamily. Homodimer.

The catalysed reaction is orotidine 5'-phosphate + H(+) = UMP + CO2. It functions in the pathway pyrimidine metabolism; UMP biosynthesis via de novo pathway; UMP from orotate: step 2/2. Catalyzes the decarboxylation of orotidine 5'-monophosphate (OMP) to uridine 5'-monophosphate (UMP). The sequence is that of Orotidine 5'-phosphate decarboxylase from Paramagnetospirillum magneticum (strain ATCC 700264 / AMB-1) (Magnetospirillum magneticum).